A 486-amino-acid chain; its full sequence is UDP-N-acetylmuramate--L-alanine ligase (486 aa).

Gly-129–Thr-135 lines the ATP pocket.

This sequence belongs to the MurCDEF family.

It is found in the cytoplasm. It carries out the reaction UDP-N-acetyl-alpha-D-muramate + L-alanine + ATP = UDP-N-acetyl-alpha-D-muramoyl-L-alanine + ADP + phosphate + H(+). Its pathway is cell wall biogenesis; peptidoglycan biosynthesis. In terms of biological role, cell wall formation. In Vibrio cholerae serotype O1 (strain ATCC 39315 / El Tor Inaba N16961), this protein is UDP-N-acetylmuramate--L-alanine ligase.